A 208-amino-acid polypeptide reads, in one-letter code: ATP-dependent Clp protease proteolytic subunit (208 aa).

Serine 111 acts as the Nucleophile in catalysis. The active site involves histidine 136.

Belongs to the peptidase S14 family. In terms of assembly, fourteen ClpP subunits assemble into 2 heptameric rings which stack back to back to give a disk-like structure with a central cavity, resembling the structure of eukaryotic proteasomes.

Its subcellular location is the cytoplasm. It carries out the reaction Hydrolysis of proteins to small peptides in the presence of ATP and magnesium. alpha-casein is the usual test substrate. In the absence of ATP, only oligopeptides shorter than five residues are hydrolyzed (such as succinyl-Leu-Tyr-|-NHMec, and Leu-Tyr-Leu-|-Tyr-Trp, in which cleavage of the -Tyr-|-Leu- and -Tyr-|-Trp bonds also occurs).. Cleaves peptides in various proteins in a process that requires ATP hydrolysis. Has a chymotrypsin-like activity. Plays a major role in the degradation of misfolded proteins. This Vibrio campbellii (strain ATCC BAA-1116) protein is ATP-dependent Clp protease proteolytic subunit.